A 425-amino-acid chain; its full sequence is Serine--tRNA ligase (425 aa).

231-233 (TAE) provides a ligand contact to L-serine. 262 to 264 (RSE) serves as a coordination point for ATP. E285 is an L-serine binding site. Position 349–352 (349–352 (EISS)) interacts with ATP. S385 lines the L-serine pocket.

This sequence belongs to the class-II aminoacyl-tRNA synthetase family. Type-1 seryl-tRNA synthetase subfamily. In terms of assembly, homodimer. The tRNA molecule binds across the dimer.

The protein localises to the cytoplasm. The catalysed reaction is tRNA(Ser) + L-serine + ATP = L-seryl-tRNA(Ser) + AMP + diphosphate + H(+). The enzyme catalyses tRNA(Sec) + L-serine + ATP = L-seryl-tRNA(Sec) + AMP + diphosphate + H(+). Its pathway is aminoacyl-tRNA biosynthesis; selenocysteinyl-tRNA(Sec) biosynthesis; L-seryl-tRNA(Sec) from L-serine and tRNA(Sec): step 1/1. Functionally, catalyzes the attachment of serine to tRNA(Ser). Is also able to aminoacylate tRNA(Sec) with serine, to form the misacylated tRNA L-seryl-tRNA(Sec), which will be further converted into selenocysteinyl-tRNA(Sec). The sequence is that of Serine--tRNA ligase from Alkaliphilus oremlandii (strain OhILAs) (Clostridium oremlandii (strain OhILAs)).